Consider the following 321-residue polypeptide: Mas-related G-protein coupled receptor member H (321 aa).

The Extracellular portion of the chain corresponds to 1 to 35; sequence MEPLAMTLYPLESTQPTRNKTPNETTWSSEHTDDH. N-linked (GlcNAc...) asparagine glycosylation is present at N23. Residues 36–56 form a helical membrane-spanning segment; that stretch reads TYFLVSLVICSLGLAGNGLLI. Topologically, residues 57–71 are cytoplasmic; sequence WFLIFCIKRKPFTIY. Residues 72 to 92 traverse the membrane as a helical segment; sequence ILHLAIADFMVLLCSSIMKLV. Residues 93-102 lie on the Extracellular side of the membrane; sequence NTFHIYNMTL. Residue N99 is glycosylated (N-linked (GlcNAc...) asparagine). A helical membrane pass occupies residues 103–126; that stretch reads ESYAILFMIFGYNTGLHLLTAISV. Topologically, residues 127–147 are cytoplasmic; that stretch reads ERCLSVLYPIWYQCQRPKHQS. The chain crosses the membrane as a helical span at residues 148 to 168; the sequence is AVACMLLWALSVLVSGLENFF. The Extracellular segment spans residues 169-188; it reads CILEVKPQFPECRYVYIFSC. A helical membrane pass occupies residues 189 to 209; the sequence is ILTFLVFVPLMIFSNLILFIQ. Over 210–225 the chain is Cytoplasmic; the sequence is VCCNLKPRQPTKLYVI. The chain crosses the membrane as a helical span at residues 226–246; sequence IMTTVILFLVFAMPMKVLLII. Residue G247 is a topological domain, extracellular. A helical membrane pass occupies residues 248–271; sequence YYSSSLDDSVWDSLPYLNMLSTIN. The Cytoplasmic segment spans residues 272–320; it reads CSINPIVYFVVGSLRRKRSRKSLKEALQKVFEEKPVVASRENVTQFSLP.

It belongs to the G-protein coupled receptor 1 family. Mas subfamily.

The protein resides in the cell membrane. Its function is as follows. Orphan receptor. May regulate nociceptor function and/or development, including the sensation or modulation of pain. The sequence is that of Mas-related G-protein coupled receptor member H (Mrgprh) from Mus musculus (Mouse).